We begin with the raw amino-acid sequence, 315 residues long: Glycine--tRNA ligase alpha subunit (315 aa).

It belongs to the class-II aminoacyl-tRNA synthetase family. As to quaternary structure, tetramer of two alpha and two beta subunits.

The protein localises to the cytoplasm. The enzyme catalyses tRNA(Gly) + glycine + ATP = glycyl-tRNA(Gly) + AMP + diphosphate. This chain is Glycine--tRNA ligase alpha subunit, found in Pseudomonas putida (strain GB-1).